The following is a 726-amino-acid chain: MKSKIEEPSANGGEAIRFELAHLLGQLLDHRWMIVAVSVLFTLMGTLYSLFATPIYSADAMVQVEQKNANTVLNDISQMMPNAQPASAAEIEIITSRMVLGKTVADLGLDVLVQQDHFPLIGAGLSRIIGQKAQQIAVSRLKVPTLWDKRELSVEVDGPDSYTVSKDGNELFKGKVGQFEQHGDVTMLVNSIEADAGTRFTVSKLNNLQAIKMISNNLVVADMGKDTGVLGLTYSGEDPVQISRVLDQVINNYLYQNIARKSEEAEKSIQFLAQQLPDVRAKLDQAEDKLNVFRRKHDSVDMSLEAKSALDSSVSIQTQLNALTFREAEVSQLFKKDHPTYRALLEKRQTLDEQQKQLNGKISQMPQTQQEIVRLTRDVQAGQEIYMQLLNRQQELNISKASTVGDVRIIDHAETAAKPVAPKSILIVAGSLILGLVVSVGLVLMKALFHHGIDNPEQLEELGLNVYASVPLSEWQRKKDQETLLKRKLDARTDPHNRLLALGNPTDLSIEAIRSLRTSLHFAMMDAQNNILMITGASPGIGKTFVCANLATLVAKTGEKVLFIDGDMRRGYTHELLGAESKTGLSDILSGKLPFNTDLVQRGDYGFDFIARGQVPPNPSELLMNSRMKELVHWASQNYDLVLIDTPPILAVTDASIIGKLAGTSLMVARFETNTVKEVEISYKRFIQNGIDIKGIILNAVVRKSANNYGYGYDYYDYSYQQGEKS.

The next 2 helical transmembrane spans lie at 32-52 and 425-445; these read WMIV…SLFA and ILIV…LVLM.

Belongs to the etk/wzc family.

The protein resides in the cell inner membrane. It carries out the reaction L-tyrosyl-[protein] + ATP = O-phospho-L-tyrosyl-[protein] + ADP + H(+). Its pathway is glycan metabolism; exopolysaccharide biosynthesis. Involved in the biosynthesis of amylovoran which functions as a virulence factor. The protein is Putative tyrosine-protein kinase AmsA (amsA) of Erwinia amylovora (Fire blight bacteria).